A 142-amino-acid chain; its full sequence is Transcription antitermination protein NusB (142 aa).

It belongs to the NusB family. Monomer or homodimer; in equilibrium, with a preference for the monomer. Dimerization may be employed to package NusB in an inactive form until recruitment into antitermination complexes.

Its function is as follows. Involved in transcription antitermination. Required for transcription of ribosomal RNA (rRNA) genes. Binds specifically to the boxA antiterminator sequence of the ribosomal RNA (rrn) operons. The sequence is that of Transcription antitermination protein NusB from Thermotoga maritima (strain ATCC 43589 / DSM 3109 / JCM 10099 / NBRC 100826 / MSB8).